The primary structure comprises 362 residues: Chorismate synthase (362 aa).

2 residues coordinate NADP(+): Arg-48 and Arg-54. Residues 125 to 127, 237 to 238, Gly-277, 292 to 296, and Arg-318 each bind FMN; these read RSS, NA, and KPTSS.

This sequence belongs to the chorismate synthase family. In terms of assembly, homotetramer. FMNH2 is required as a cofactor.

The enzyme catalyses 5-O-(1-carboxyvinyl)-3-phosphoshikimate = chorismate + phosphate. The protein operates within metabolic intermediate biosynthesis; chorismate biosynthesis; chorismate from D-erythrose 4-phosphate and phosphoenolpyruvate: step 7/7. Catalyzes the anti-1,4-elimination of the C-3 phosphate and the C-6 proR hydrogen from 5-enolpyruvylshikimate-3-phosphate (EPSP) to yield chorismate, which is the branch point compound that serves as the starting substrate for the three terminal pathways of aromatic amino acid biosynthesis. This reaction introduces a second double bond into the aromatic ring system. This Idiomarina loihiensis (strain ATCC BAA-735 / DSM 15497 / L2-TR) protein is Chorismate synthase.